A 70-amino-acid chain; its full sequence is Kappa-scoloptoxin(07)-Ssm2b (70 aa).

Positions 1–19 (MLVFYALLFVSVFSSTVMG) are cleaved as a signal peptide. Residues 20-39 (ATIDKPILREAIEEIDVNKR) constitute a propeptide that is removed on maturation.

This sequence belongs to the scoloptoxin-07 family. Post-translationally, contains 3 disulfide bonds. In terms of tissue distribution, expressed by the venom gland.

It localises to the secreted. Its function is as follows. Inhibits voltage-gated potassium channels. The sequence is that of Kappa-scoloptoxin(07)-Ssm2b from Scolopendra mutilans (Chinese red-headed centipede).